The sequence spans 275 residues: MAIVKSKPTSPGRRFVVKVVNHDLHKGEPYAPLLDKKSKSGGRNNTGRITTRHVGGGHKQHYRIVDFRRNKDGIPATVERIEYDPNRTAYIALVVYADGERRYIIAPKGLSAGDKIESGNAAAIKVGNTLPVRNIPLGSVIHCVELKPGKGAQLARSAGASAQLVAKDGAYVTLRLRSGEMRKVLSDCRATLGEVSNTEHNLRSLGKAGAKRWLGIRPTVRGVAMNPVDHPHGGGEGRTSGGRHPVSPWGIPTKGYKTRKNKRTDNMIVRRRDKK.

A compositionally biased stretch (basic and acidic residues) spans 28 to 38 (EPYAPLLDKKS). Disordered stretches follow at residues 28–55 (EPYA…RHVG) and 224–258 (AMNP…GYKT).

This sequence belongs to the universal ribosomal protein uL2 family. Part of the 50S ribosomal subunit. Forms a bridge to the 30S subunit in the 70S ribosome.

Its function is as follows. One of the primary rRNA binding proteins. Required for association of the 30S and 50S subunits to form the 70S ribosome, for tRNA binding and peptide bond formation. It has been suggested to have peptidyltransferase activity; this is somewhat controversial. Makes several contacts with the 16S rRNA in the 70S ribosome. In Cellvibrio japonicus (strain Ueda107) (Pseudomonas fluorescens subsp. cellulosa), this protein is Large ribosomal subunit protein uL2.